The sequence spans 174 residues: RNA pyrophosphohydrolase (174 aa).

Residues 6-149 (GYRPNVGIIL…KRDVYLGALK (144 aa)) form the Nudix hydrolase domain. Positions 38–59 (GGIKPGESPETAMYRELYEEVG) match the Nudix box motif.

The protein belongs to the Nudix hydrolase family. RppH subfamily. Requires a divalent metal cation as cofactor.

In terms of biological role, accelerates the degradation of transcripts by removing pyrophosphate from the 5'-end of triphosphorylated RNA, leading to a more labile monophosphorylated state that can stimulate subsequent ribonuclease cleavage. This Neisseria meningitidis serogroup C (strain 053442) protein is RNA pyrophosphohydrolase.